Here is a 261-residue protein sequence, read N- to C-terminus: Uridine-cytidine kinase 2 (261 aa).

The segment covering 1-16 (MAGDSEQTLQNHQQPN) has biased composition (polar residues). The interval 1–24 (MAGDSEQTLQNHQQPNGGEPFLIG) is disordered. An N-acetylalanine modification is found at Ala2. 27–35 (GGTASGKSS) provides a ligand contact to ATP. The substrate site is built by Asp84, Tyr112, His117, Arg166, Arg176, and Gln184. Asp213 contributes to the ATP binding site. Positions 236–261 (RQTNGCLNGYTPSRKRQASESSSRPH) are disordered. Position 254 is a phosphoserine (Ser254).

This sequence belongs to the uridine kinase family. Homotetramer. As to expression, according to PubMed:8812458; testis-specific. According to PubMed:11306702, placenta-specific.

The catalysed reaction is uridine + ATP = UMP + ADP + H(+). It catalyses the reaction cytidine + ATP = CMP + ADP + H(+). It participates in pyrimidine metabolism; CTP biosynthesis via salvage pathway; CTP from cytidine: step 1/3. It functions in the pathway pyrimidine metabolism; UMP biosynthesis via salvage pathway; UMP from uridine: step 1/1. Functionally, phosphorylates uridine and cytidine to uridine monophosphate and cytidine monophosphate. Does not phosphorylate deoxyribonucleosides or purine ribonucleosides. Can use ATP or GTP as a phosphate donor. Can also phosphorylate cytidine and uridine nucleoside analogs such as 6-azauridine, 5-fluorouridine, 4-thiouridine, 5-bromouridine, N(4)-acetylcytidine, N(4)-benzoylcytidine, 5-fluorocytidine, 2-thiocytidine, 5-methylcytidine, and N(4)-anisoylcytidine. The chain is Uridine-cytidine kinase 2 (UCK2) from Homo sapiens (Human).